The sequence spans 292 residues: MQKYEKLEKIGEGTYGTVFKGRNRETLEIVALKRVRLDEDDEGVPSSALREICLLKELKHKNIVRLYDVLHSEKKLTLVFEHCDQDLKKYFDSLNGDIDMAVCRSFMLQLLRGLAFCHSHNVLHRDLKPQNLLINKNGELKLADFGLARAFGIPVKCYSAEVVTLWYRPPDVLFGAKLYTTSIDMWSAGCIFAELADAGRPLFPGSDVLDQLMKIFRVLGTPTEESWPGVTHLSDYVALPHFPAITSWSQIVPRLSSKGRDLLQKLLVCRPNQRVSAEQAMQHPYFTDSSNH.

Residues 4-286 enclose the Protein kinase domain; it reads YEKLEKIGEG…AEQAMQHPYF (283 aa). Residues 10-18 and lysine 33 contribute to the ATP site; that span reads IGEGTYGTV. Threonine 14 bears the Phosphothreonine mark. Phosphotyrosine is present on tyrosine 15. Aspartate 126 functions as the Proton acceptor in the catalytic mechanism. A Phosphoserine modification is found at serine 159.

The protein belongs to the protein kinase superfamily. CMGC Ser/Thr protein kinase family. CDC2/CDKX subfamily.

The enzyme catalyses L-seryl-[protein] + ATP = O-phospho-L-seryl-[protein] + ADP + H(+). The catalysed reaction is L-threonyl-[protein] + ATP = O-phospho-L-threonyl-[protein] + ADP + H(+). Its function is as follows. Probably involved in the control of the cell cycle. Interacts with D1 and D3-type G1 cyclins. Possible regulator of neuronal differentiation and/or development. The chain is Cyclin-dependent kinase 5 homolog (Cdk5) from Glossina morsitans morsitans (Savannah tsetse fly).